The chain runs to 225 residues: Small ribosomal subunit protein uS3 (225 aa).

Residues 38–106 enclose the KH type-2 domain; it reads IRRFLQKKFK…PIGMNIIEVK (69 aa).

It belongs to the universal ribosomal protein uS3 family. In terms of assembly, part of the 30S ribosomal subunit. Forms a tight complex with proteins S10 and S14.

Functionally, binds the lower part of the 30S subunit head. Binds mRNA in the 70S ribosome, positioning it for translation. The sequence is that of Small ribosomal subunit protein uS3 from Leptospira biflexa serovar Patoc (strain Patoc 1 / Ames).